A 430-amino-acid chain; its full sequence is Enolase (430 aa).

Gln165 is a (2R)-2-phosphoglycerate binding site. Glu207 functions as the Proton donor in the catalytic mechanism. Mg(2+) is bound by residues Asp244, Glu287, and Asp314. (2R)-2-phosphoglycerate contacts are provided by Lys339, Arg368, Ser369, and Lys390. The active-site Proton acceptor is Lys339.

This sequence belongs to the enolase family. In terms of assembly, component of the RNA degradosome, a multiprotein complex involved in RNA processing and mRNA degradation. Mg(2+) serves as cofactor.

It localises to the cytoplasm. Its subcellular location is the secreted. The protein resides in the cell surface. It catalyses the reaction (2R)-2-phosphoglycerate = phosphoenolpyruvate + H2O. Its pathway is carbohydrate degradation; glycolysis; pyruvate from D-glyceraldehyde 3-phosphate: step 4/5. Its function is as follows. Catalyzes the reversible conversion of 2-phosphoglycerate (2-PG) into phosphoenolpyruvate (PEP). It is essential for the degradation of carbohydrates via glycolysis. The chain is Enolase from Stenotrophomonas maltophilia (strain K279a).